A 301-amino-acid chain; its full sequence is Ribosomal RNA large subunit methyltransferase F (301 aa).

Belongs to the methyltransferase superfamily. METTL16/RlmF family.

It is found in the cytoplasm. The catalysed reaction is adenosine(1618) in 23S rRNA + S-adenosyl-L-methionine = N(6)-methyladenosine(1618) in 23S rRNA + S-adenosyl-L-homocysteine + H(+). Functionally, specifically methylates the adenine in position 1618 of 23S rRNA. The protein is Ribosomal RNA large subunit methyltransferase F of Colwellia psychrerythraea (strain 34H / ATCC BAA-681) (Vibrio psychroerythus).